We begin with the raw amino-acid sequence, 393 residues long: Succinate--CoA ligase [ADP-forming] subunit beta (393 aa).

Residues K9–E251 enclose the ATP-grasp domain. ATP contacts are provided by residues K46, G53 to G55, S109, and E114. 2 residues coordinate Mg(2+): N206 and D220. Residues N271 and G328–M330 contribute to the substrate site.

This sequence belongs to the succinate/malate CoA ligase beta subunit family. In terms of assembly, heterotetramer of two alpha and two beta subunits. It depends on Mg(2+) as a cofactor.

It catalyses the reaction succinate + ATP + CoA = succinyl-CoA + ADP + phosphate. The catalysed reaction is GTP + succinate + CoA = succinyl-CoA + GDP + phosphate. The protein operates within carbohydrate metabolism; tricarboxylic acid cycle; succinate from succinyl-CoA (ligase route): step 1/1. Succinyl-CoA synthetase functions in the citric acid cycle (TCA), coupling the hydrolysis of succinyl-CoA to the synthesis of either ATP or GTP and thus represents the only step of substrate-level phosphorylation in the TCA. The beta subunit provides nucleotide specificity of the enzyme and binds the substrate succinate, while the binding sites for coenzyme A and phosphate are found in the alpha subunit. In Opitutus terrae (strain DSM 11246 / JCM 15787 / PB90-1), this protein is Succinate--CoA ligase [ADP-forming] subunit beta.